The primary structure comprises 387 residues: Probable multidrug resistance protein EmrK (387 aa).

The Cytoplasmic portion of the chain corresponds to 1-16 (MEQINSNKKHSNRRKY). A helical membrane pass occupies residues 17-37 (FSLLAVVLFIAFSGAYAYWSM). At 38–387 (ELEDMISTDD…SNIISHNGQL (350 aa)) the chain is on the periplasmic side.

It belongs to the membrane fusion protein (MFP) (TC 8.A.1) family. In terms of assembly, part of the tripartite efflux system EmrYK-TolC, which is composed of an inner membrane transporter, EmrY, a membrane fusion protein, EmrK, and an outer membrane component, TolC. The complex forms a large protein conduit and can translocate molecules across both the inner and outer membranes.

Its subcellular location is the cell inner membrane. Part of the tripartite efflux system EmrYK-TolC, which confers resistance to various drugs. This chain is Probable multidrug resistance protein EmrK (emrK), found in Escherichia coli (strain K12).